The sequence spans 370 residues: Histidinol-phosphate aminotransferase 1 (370 aa).

Position 222 is an N6-(pyridoxal phosphate)lysine (lysine 222).

The protein belongs to the class-II pyridoxal-phosphate-dependent aminotransferase family. Histidinol-phosphate aminotransferase subfamily. As to quaternary structure, homodimer. Requires pyridoxal 5'-phosphate as cofactor.

The catalysed reaction is L-histidinol phosphate + 2-oxoglutarate = 3-(imidazol-4-yl)-2-oxopropyl phosphate + L-glutamate. The protein operates within amino-acid biosynthesis; L-histidine biosynthesis; L-histidine from 5-phospho-alpha-D-ribose 1-diphosphate: step 7/9. This is Histidinol-phosphate aminotransferase 1 (hisC1) from Bacillus cereus (strain ATCC 14579 / DSM 31 / CCUG 7414 / JCM 2152 / NBRC 15305 / NCIMB 9373 / NCTC 2599 / NRRL B-3711).